We begin with the raw amino-acid sequence, 116 residues long: Ribonuclease P protein component (116 aa).

It belongs to the RnpA family. In terms of assembly, consists of a catalytic RNA component (M1 or rnpB) and a protein subunit.

The enzyme catalyses Endonucleolytic cleavage of RNA, removing 5'-extranucleotides from tRNA precursor.. Its function is as follows. RNaseP catalyzes the removal of the 5'-leader sequence from pre-tRNA to produce the mature 5'-terminus. It can also cleave other RNA substrates such as 4.5S RNA. The protein component plays an auxiliary but essential role in vivo by binding to the 5'-leader sequence and broadening the substrate specificity of the ribozyme. In Geobacillus sp. (strain WCH70), this protein is Ribonuclease P protein component.